The following is a 176-amino-acid chain: MTTIVSVRRNGQVVIGGDGQATMGNTVMKGNVRKVRRLYNDKVIAGFAGGTADAFTLFELFERKLELHQGHLTKAAVELAKDWRTDRMLRKLEALLAVADETTSLIITGNGDVVQPENDLIAIGSGGPYAQAAARAMLENTDLSAREIAEKALNIAGDICIYTNHNVNFEEISSKE.

Residue T2 is part of the active site. 3 residues coordinate Na(+): G157, C160, and T163.

It belongs to the peptidase T1B family. HslV subfamily. A double ring-shaped homohexamer of HslV is capped on each side by a ring-shaped HslU homohexamer. The assembly of the HslU/HslV complex is dependent on binding of ATP.

The protein resides in the cytoplasm. The enzyme catalyses ATP-dependent cleavage of peptide bonds with broad specificity.. Its activity is regulated as follows. Allosterically activated by HslU binding. Protease subunit of a proteasome-like degradation complex believed to be a general protein degrading machinery. This chain is ATP-dependent protease subunit HslV, found in Proteus mirabilis (strain HI4320).